Reading from the N-terminus, the 90-residue chain is Small ribosomal subunit protein bS16 (90 aa).

It belongs to the bacterial ribosomal protein bS16 family.

In Bacillus pumilus (strain SAFR-032), this protein is Small ribosomal subunit protein bS16.